Consider the following 118-residue polypeptide: Phosphoribosyl-AMP cyclohydrolase (118 aa).

D87 contributes to the Mg(2+) binding site. C88 is a binding site for Zn(2+). Mg(2+)-binding residues include D89 and D91. 2 residues coordinate Zn(2+): C104 and C111.

The protein belongs to the PRA-CH family. Homodimer. Mg(2+) serves as cofactor. Zn(2+) is required as a cofactor.

It is found in the cytoplasm. It catalyses the reaction 1-(5-phospho-beta-D-ribosyl)-5'-AMP + H2O = 1-(5-phospho-beta-D-ribosyl)-5-[(5-phospho-beta-D-ribosylamino)methylideneamino]imidazole-4-carboxamide. It functions in the pathway amino-acid biosynthesis; L-histidine biosynthesis; L-histidine from 5-phospho-alpha-D-ribose 1-diphosphate: step 3/9. Catalyzes the hydrolysis of the adenine ring of phosphoribosyl-AMP. The protein is Phosphoribosyl-AMP cyclohydrolase of Corynebacterium glutamicum (strain ATCC 13032 / DSM 20300 / JCM 1318 / BCRC 11384 / CCUG 27702 / LMG 3730 / NBRC 12168 / NCIMB 10025 / NRRL B-2784 / 534).